Reading from the N-terminus, the 370-residue chain is Polyadenylate-binding protein 4-like (370 aa).

RRM domains follow at residues 10–88 (ASLY…WSQR), 98–174 (GNVF…RFKN), 190–267 (TNVY…RAQK), and 293–369 (VKLY…LAQR).

Belongs to the polyadenylate-binding protein type-1 family.

Functionally, may bind RNA. This Homo sapiens (Human) protein is Polyadenylate-binding protein 4-like (PABPC4L).